Consider the following 510-residue polypeptide: Chromosomal replication initiator protein DnaA (510 aa).

A domain I, interacts with DnaA modulators region spans residues 1–107 (MTNDPGSGFA…VRIAPPPADD (107 aa)). The domain II stretch occupies residues 107-169 (DDDDSVAAAV…ADTSASAGGT (63 aa)). Residues 119–168 (PGLEASPETSQEVSDEIDDFGENAPNSRQSWPTHFKKRSTDADTSASAGG) are disordered. A domain III, AAA+ region region spans residues 170–386 (SLNRRYTFDT…GALIRVTAFA (217 aa)). Positions 214, 216, 217, and 218 each coordinate ATP. The segment at 387–510 (SLNKTPIDKA…TTRIRQRSKR (124 aa)) is domain IV, binds dsDNA.

It belongs to the DnaA family. Oligomerizes as a right-handed, spiral filament on DNA at oriC.

Its subcellular location is the cytoplasm. Plays an essential role in the initiation and regulation of chromosomal replication. ATP-DnaA binds to the origin of replication (oriC) to initiate formation of the DNA replication initiation complex once per cell cycle. Binds the DnaA box (a 9 base pair repeat at the origin) and separates the double-stranded (ds)DNA. Forms a right-handed helical filament on oriC DNA; dsDNA binds to the exterior of the filament while single-stranded (ss)DNA is stabiized in the filament's interior. The ATP-DnaA-oriC complex binds and stabilizes one strand of the AT-rich DNA unwinding element (DUE), permitting loading of DNA polymerase. After initiation quickly degrades to an ADP-DnaA complex that is not apt for DNA replication. Binds acidic phospholipids. This Mycobacterium marinum (strain ATCC BAA-535 / M) protein is Chromosomal replication initiator protein DnaA.